A 60-amino-acid polypeptide reads, in one-letter code: MAVPARRTSKAKKNKRRTHYKVTAPSVTFDETTGDYSRSHRVSLKGYYKGRKIAKAAAAE.

It belongs to the bacterial ribosomal protein bL32 family.

The protein is Large ribosomal subunit protein bL32 of Streptococcus gordonii (strain Challis / ATCC 35105 / BCRC 15272 / CH1 / DL1 / V288).